A 137-amino-acid chain; its full sequence is Peptide methionine sulfoxide reductase MsrB (137 aa).

The disordered stretch occupies residues 1-33; that stretch reads MSNNQDRPGQITDESLRERLSPEAYAVTRRAGT. One can recognise a MsrB domain in the interval 13-135; sequence DESLRERLSP…NSLSLDFKAA (123 aa). Positions 52, 55, 101, and 104 each coordinate Zn(2+). The Nucleophile role is filled by C124.

This sequence belongs to the MsrB Met sulfoxide reductase family. The cofactor is Zn(2+).

It carries out the reaction L-methionyl-[protein] + [thioredoxin]-disulfide + H2O = L-methionyl-(R)-S-oxide-[protein] + [thioredoxin]-dithiol. In Thioalkalivibrio sulfidiphilus (strain HL-EbGR7), this protein is Peptide methionine sulfoxide reductase MsrB.